The sequence spans 507 residues: Probable Xaa-Pro aminopeptidase ARB_01886 (507 aa).

Positions 275, 286, 434, and 478 each coordinate Mn(2+).

Belongs to the peptidase M24B family. Requires Mn(2+) as cofactor.

It catalyses the reaction Release of any N-terminal amino acid, including proline, that is linked to proline, even from a dipeptide or tripeptide.. Functionally, catalyzes the removal of a penultimate prolyl residue from the N-termini of peptides. This Arthroderma benhamiae (strain ATCC MYA-4681 / CBS 112371) (Trichophyton mentagrophytes) protein is Probable Xaa-Pro aminopeptidase ARB_01886.